Consider the following 844-residue polypeptide: Leucine--tRNA ligase (844 aa).

A 'HIGH' region motif is present at residues 39–49 (PYPSGRIHMGH). Residues 621 to 625 (KMSKS) carry the 'KMSKS' region motif. Lysine 624 contributes to the ATP binding site.

This sequence belongs to the class-I aminoacyl-tRNA synthetase family.

It is found in the cytoplasm. The catalysed reaction is tRNA(Leu) + L-leucine + ATP = L-leucyl-tRNA(Leu) + AMP + diphosphate. In Paracoccus denitrificans (strain Pd 1222), this protein is Leucine--tRNA ligase.